We begin with the raw amino-acid sequence, 111 residues long: Large ribosomal subunit protein uL22 (111 aa).

This sequence belongs to the universal ribosomal protein uL22 family. In terms of assembly, part of the 50S ribosomal subunit.

Functionally, this protein binds specifically to 23S rRNA; its binding is stimulated by other ribosomal proteins, e.g. L4, L17, and L20. It is important during the early stages of 50S assembly. It makes multiple contacts with different domains of the 23S rRNA in the assembled 50S subunit and ribosome. In terms of biological role, the globular domain of the protein is located near the polypeptide exit tunnel on the outside of the subunit, while an extended beta-hairpin is found that lines the wall of the exit tunnel in the center of the 70S ribosome. The protein is Large ribosomal subunit protein uL22 of Chlamydia felis (strain Fe/C-56) (Chlamydophila felis).